The sequence spans 387 residues: Phosphoglycerate kinase (387 aa).

Substrate-binding positions include 21–23 (DLN), Arg-36, 59–62 (HLGR), Arg-113, and Arg-146. ATP-binding positions include Lys-197, Glu-314, and 340-343 (GGDT).

It belongs to the phosphoglycerate kinase family. In terms of assembly, monomer.

It localises to the cytoplasm. The catalysed reaction is (2R)-3-phosphoglycerate + ATP = (2R)-3-phospho-glyceroyl phosphate + ADP. Its pathway is carbohydrate degradation; glycolysis; pyruvate from D-glyceraldehyde 3-phosphate: step 2/5. This is Phosphoglycerate kinase (pgk) from Vibrio cholerae serotype O1 (strain ATCC 39541 / Classical Ogawa 395 / O395).